The following is a 292-amino-acid chain: MFTGVGTAIVTPFSNGEVDYGSYEKLVRWQIESGVKAIVVAGTTGEGVTLTVEEREKLVALTKQICEGKAQVIVGTGTNDTRKTLELSLSAEKSGADALLIVTPYYNKPTQEGLYAHYKYLSERLSKPIIIYNVPSRTGVNISPETVARLASDCKNIVAIKEANTDVNQADEIYRLTNGDFYIYSGNDDRAFHMICAGAKGVISVASNIIPEQMVELANKTLQNDVVTARNIHFKYLELMKVLFVETNPIPVKAALNLLGIIKNELRLPLVPAKQSTVELLEKVMKKVGVLS.

Thr44 provides a ligand contact to pyruvate. Tyr132 acts as the Proton donor/acceptor in catalysis. Lys161 functions as the Schiff-base intermediate with substrate in the catalytic mechanism. A pyruvate-binding site is contributed by Ile203.

This sequence belongs to the DapA family. In terms of assembly, homotetramer; dimer of dimers.

The protein resides in the cytoplasm. The enzyme catalyses L-aspartate 4-semialdehyde + pyruvate = (2S,4S)-4-hydroxy-2,3,4,5-tetrahydrodipicolinate + H2O + H(+). The protein operates within amino-acid biosynthesis; L-lysine biosynthesis via DAP pathway; (S)-tetrahydrodipicolinate from L-aspartate: step 3/4. Its function is as follows. Catalyzes the condensation of (S)-aspartate-beta-semialdehyde [(S)-ASA] and pyruvate to 4-hydroxy-tetrahydrodipicolinate (HTPA). This Fervidobacterium nodosum (strain ATCC 35602 / DSM 5306 / Rt17-B1) protein is 4-hydroxy-tetrahydrodipicolinate synthase.